Here is a 335-residue protein sequence, read N- to C-terminus: Lipase chaperone (335 aa).

The helical transmembrane segment at 7 to 23 threads the bilayer; the sequence is LLPLAIALGLGFFIARP.

The protein belongs to the lipase chaperone family.

It is found in the cell inner membrane. Functionally, may be involved in the folding of the extracellular lipase during its passage through the periplasm. This is Lipase chaperone (lifO) from Ectopseudomonas mendocina (Pseudomonas mendocina).